A 447-amino-acid chain; its full sequence is Phosphoglucosamine mutase (447 aa).

S102 acts as the Phosphoserine intermediate in catalysis. Residues S102, D241, D243, and D245 each coordinate Mg(2+). S102 carries the phosphoserine modification.

It belongs to the phosphohexose mutase family. The cofactor is Mg(2+). In terms of processing, activated by phosphorylation.

It catalyses the reaction alpha-D-glucosamine 1-phosphate = D-glucosamine 6-phosphate. Catalyzes the conversion of glucosamine-6-phosphate to glucosamine-1-phosphate. The polypeptide is Phosphoglucosamine mutase (Delftia acidovorans (strain DSM 14801 / SPH-1)).